Reading from the N-terminus, the 419-residue chain is Inward rectifier potassium channel 16 (419 aa).

Topologically, residues 1 to 67 (MSYYGSSYRI…MVDIFTTLVD (67 aa)) are cytoplasmic. A helical membrane pass occupies residues 68 to 94 (TKWRHMFVVFSLSYILSWLIFGSIFWL). Topologically, residues 95–117 (IALHHGDLLSDPDITPCVDNVHS) are extracellular. The segment at residues 118–134 (FTAAFLFSLETQTTIGY) is an intramembrane region (helical; Pore-forming). The short motif at 131-136 (TIGYGY) is the Selectivity filter element. Residues 135–143 (GYRCVTEEC) lie on the Extracellular side of the membrane. A helical membrane pass occupies residues 144–171 (SVAVLTVILQSILSCIINTFIIGAALAK). Residues 172 to 419 (MATARKRAQT…LNRISMESQM (248 aa)) are Cytoplasmic-facing. Residues S358, S374, and S376 each carry the phosphoserine modification.

Belongs to the inward rectifier-type potassium channel (TC 1.A.2.1) family. KCNJ16 subfamily. In terms of assembly, it forms heteromeric channels with Kir4.1/KCNJ10; this interaction is required for KCNJ16 localization to the basolateral membrane in kidney cells. As a heteromer with KCNJ10, may interact with MAGI1; this interaction may facilitate KCNJ10/KCNJ16 potassium channel expression at the basolateral membrane in kidney cells. May form heteromers with Kir2.1/KCNJ2. Can form heteromeric channels with Kir4.2/KCNJ15. As to expression, expressed in the brain, testis, liver, spleen, kidney, submaxillary gland and adrenals. In the kidney, expressed in the epithelial cells of both proximal and distal convoluted tubules, in the endothelial cells surrounding glomerular capillaries and in the flattened parietal layer of Bowman's capsule.

The protein resides in the membrane. It is found in the basolateral cell membrane. The catalysed reaction is K(+)(in) = K(+)(out). With respect to regulation, channel activity is strongly regulated by variations of cytosolic pH; channels are activated by alkaline and inhibited by acidic pH values. Activated by phosphatidylinositol 4,5 biphosphate (PtdIns(4,5)P2). Its function is as follows. Inward rectifier potassium channels are characterized by a greater tendency to allow potassium to flow into the cell rather than out of it. Their voltage dependence is regulated by the concentration of extracellular potassium; as external potassium is raised, the voltage range of the channel opening shifts to more positive voltages. The inward rectification is mainly due to the blockage of outward current by internal magnesium. KCNJ16 may be involved in the regulation of fluid and pH balance. In the kidney, together with KCNJ10, mediates basolateral K(+) recycling in distal tubules; this process is critical for Na(+) reabsorption at the tubules. In Rattus norvegicus (Rat), this protein is Inward rectifier potassium channel 16 (Kcnj16).